Here is a 327-residue protein sequence, read N- to C-terminus: MTIEEAKQHILEGGKITEEQALSLANHPDKEALYEAAHQITRHFMGNKFDTCSIINAKSGNCSEDCKWCAQSGHYKTLVNLYPLLPAKECVYHAVYNRKQGIRRFALVTSGKRVSDKELEQITDTIRQIKRQSDIKCCASMGLLTRSQLQSLYDSGVENYHCNIETAPSYFRQLCSTHTIEQKMETIHTAREIGFRICCGGIIGMGETMKERIEMACFLQKEGVLSIPLNLLQPIPGTPMENTQILEEEEWLTTIALFRLINPNAFLRFSGGRAQLSEVTQRKSLHIGINSAIIGDLLTTIGSKVEEDKVLFTSEGYSLTENTDWEK.

In terms of domain architecture, Radical SAM core spans 44-273; that stretch reads FMGNKFDTCS…NAFLRFSGGR (230 aa). [4Fe-4S] cluster is bound by residues C62, C66, and C69. Residues C138, C198, and R268 each coordinate [2Fe-2S] cluster.

The protein belongs to the radical SAM superfamily. Biotin synthase family. As to quaternary structure, homodimer. The cofactor is [4Fe-4S] cluster. Requires [2Fe-2S] cluster as cofactor.

It catalyses the reaction (4R,5S)-dethiobiotin + (sulfur carrier)-SH + 2 reduced [2Fe-2S]-[ferredoxin] + 2 S-adenosyl-L-methionine = (sulfur carrier)-H + biotin + 2 5'-deoxyadenosine + 2 L-methionine + 2 oxidized [2Fe-2S]-[ferredoxin]. It functions in the pathway cofactor biosynthesis; biotin biosynthesis; biotin from 7,8-diaminononanoate: step 2/2. In terms of biological role, catalyzes the conversion of dethiobiotin (DTB) to biotin by the insertion of a sulfur atom into dethiobiotin via a radical-based mechanism. The protein is Biotin synthase of Parabacteroides distasonis (strain ATCC 8503 / DSM 20701 / CIP 104284 / JCM 5825 / NCTC 11152).